A 1169-amino-acid chain; its full sequence is C5a peptidase (1169 aa).

An N-terminal signal peptide occupies residues 1-31 (MRKKQKLPFDKLAIALMSTSILLNAQSDIKA). Residues 33-111 (TVTEDTPATE…ETIRDLNDPS (79 aa)) form a disordered region. Positions 48–67 (PQQTAVSEEAPSSSSKETNP) are enriched in polar residues. The Peptidase S8 domain occupies 101 to 583 (KETIRDLNDP…AGAVDAKKAS (483 aa)). Residues 102-111 (ETIRDLNDPS) show a composition bias toward basic and acidic residues. Catalysis depends on charge relay system residues Asp-132, His-195, and Ser-514. The interval 1028–1135 (NLLEGHSNKP…RDQLPTTNDK (108 aa)) is disordered. 3 stretches are compositionally biased toward basic and acidic residues: residues 1033 to 1056 (HSNK…KPEQ), 1063 to 1073 (PDKKPEAKPEQ), and 1080 to 1092 (PDKK…EKDS). 4 tandem repeats follow at residues 1036–1052 (KPEQ…TPET), 1053–1069 (KPEQ…KPEA), 1070–1086 (KPEQ…KPET), and 1087–1103 (KPEK…TPQK). The segment at 1036-1103 (KPEQDGSDQV…GQTPGKTPQK (68 aa)) is 4 X 17 AA tandem repeats. Residues 1093 to 1108 (SGQTPGKTPQKGQPSR) are compositionally biased toward polar residues. The LPXTG sorting signal motif lies at 1129 to 1133 (LPTTN). Pentaglycyl murein peptidoglycan amidated threonine is present on Thr-1132. A propeptide spans 1133-1169 (NDKDTNRLHLLKLVMTTFFFGLVAHIFKTKRQKETKK) (removed by sortase).

It belongs to the peptidase S8 family. Cleaved by SpeB protease; leading to its degradation. Degradation by SpeB is probably strictly regulated to preserve integrity of C5a peptidase.

The protein localises to the secreted. It localises to the cell wall. The catalysed reaction is The primary cleavage site is at 67-His-|-Lys-68 in human C5a with a minor secondary cleavage site at 58-Ala-|-Ser-59.. In terms of biological role, this virulence factor of S.pyogenes specifically cleaves the human serum chemotaxin C5a at '68-Lys-|-Asp-69' bond near its C-terminus, destroying its ability to serve as a chemoattractant. The chain is C5a peptidase (scpA) from Streptococcus pyogenes serotype M3 (strain ATCC BAA-595 / MGAS315).